We begin with the raw amino-acid sequence, 167 residues long: Dual specificity protein phosphatase 1B (167 aa).

In terms of domain architecture, Tyrosine-protein phosphatase spans 24–165; sequence DLSEIQQGLF…LQQFEKSIQG (142 aa). C109 (phosphocysteine intermediate) is an active-site residue.

Belongs to the protein-tyrosine phosphatase family. Non-receptor class dual specificity subfamily. In terms of assembly, associates with MPK3 and MPK6. Interacts with MPK6 is promoted during HR-like responses triggered by fungal elicitors, whereas interaction with MPK3 in repressed. As to expression, expressed in flowers, seedlings, roots, leaves, and seeds. Present in stomata and meristematic cells.

Its subcellular location is the nucleus. The protein localises to the cytoplasm. The enzyme catalyses O-phospho-L-tyrosyl-[protein] + H2O = L-tyrosyl-[protein] + phosphate. The catalysed reaction is O-phospho-L-seryl-[protein] + H2O = L-seryl-[protein] + phosphate. It carries out the reaction O-phospho-L-threonyl-[protein] + H2O = L-threonyl-[protein] + phosphate. Functionally, has a dual specificity toward Ser/Thr and Tyr-containing proteins. Prevents biotic and abiotic stress responses, including ozone, oxidative stress and pathogen attacks; represses MAPK activities during hypersensitive response to limit the spread of the HR response after infection by necrotrophic pathogen such as Botrytis cinerea. May be also involved in ABA and salt responses. Dephosphorylates MPK3 and MPK6. This is Dual specificity protein phosphatase 1B (DSPTP1B) from Arabidopsis thaliana (Mouse-ear cress).